The sequence spans 402 residues: MTSIIARMSNSRRQNTSLPPWAHSMLRSLERSLGPLMAILAERNLKLFSGRVVPAQGEETFENWLIQVNEVLPDWNMSEEEKLRRLIKTLRGPAREVMLLLQAANPNLSVADFLHAMKLVFGESESSVTAHSKFFNTLQAQGEKASLYVIRLEVQLQNAIQAGIIAQKDANQSRLHQFLLGAELNGDLRFRLKNLLRMYANEQERLPSFLELIRMIREEEDWDDIFIKQKRAKRSESVVARATRPVAFGGSPPIVIDNKDCNVIEIDDTPDDSDEDVILVGESQDLPRSFSDSPPSRRRARPQDQVLIIDSPNNSQFPSPCTSGGSGYKNDGPGNMRRTRKRKHTIRCSYCGEEGHSKETCDNESNKAQMFENLIITLQELAHTEERSREAPVEPSDPCELQ.

The segment covering 268–277 (DTPDDSDEDV) has biased composition (acidic residues). Residues 268-342 (DTPDDSDEDV…PGNMRRTRKR (75 aa)) are disordered. Residues 311–323 (SPNNSQFPSPCTS) show a composition bias toward polar residues. The CCHC-type zinc finger occupies 346–363 (IRCSYCGEEGHSKETCDN). The segment covering 383-392 (HTEERSREAP) has biased composition (basic and acidic residues). Positions 383–402 (HTEERSREAPVEPSDPCELQ) are disordered.

This sequence belongs to the ZCCHC12 family. Interacts with SMAD1 and CREB-binding protein (CBP). Forms a protein-DNA complex through its association with SMAD1.

Transcriptional coactivator in the bone morphogenetic protein (BMP)-signaling pathway. It positively modulates BMP signaling by interacting with SMAD1 and associating with CBP in the transcription complex. It contributes to the BMP-induced enhancement of cholinergic-neuron-specific gene expression. The chain is Zinc finger CCHC domain-containing protein 12 (ZCCHC12) from Bos taurus (Bovine).